Reading from the N-terminus, the 220-residue chain is Glutathione peroxidase (220 aa).

U64 is an active-site residue. U64 is a non-standard amino acid (selenocysteine).

The protein belongs to the glutathione peroxidase family. In terms of processing, during periods of oxidative stress, Sec-64 may react with a superoxide radical, irreversibly lose hydroselenide and be converted to dehydroalanine.

The enzyme catalyses 2 glutathione + H2O2 = glutathione disulfide + 2 H2O. In terms of biological role, may protect the virus and component of infected cells from oxidative damage by peroxides whose formation may be stimulated by infection. This is Glutathione peroxidase (GPX1) from Homo sapiens (Human).